The primary structure comprises 185 residues: Large ribosomal subunit protein uL5 (185 aa).

This sequence belongs to the universal ribosomal protein uL5 family. As to quaternary structure, part of the 50S ribosomal subunit; contacts the 5S rRNA and probably tRNA. Forms a bridge to the 30S subunit in the 70S ribosome.

In terms of biological role, this is one of the proteins that bind and probably mediate the attachment of the 5S RNA into the large ribosomal subunit, where it forms part of the central protuberance. In the 70S ribosome it contacts protein S13 of the 30S subunit (bridge B1b), connecting the 2 subunits; this bridge is implicated in subunit movement. May contact the P site tRNA; the 5S rRNA and some of its associated proteins might help stabilize positioning of ribosome-bound tRNAs. The chain is Large ribosomal subunit protein uL5 from Haloquadratum walsbyi (strain DSM 16790 / HBSQ001).